Reading from the N-terminus, the 668-residue chain is Fructose-1,6-bisphosphatase class 3 (668 aa).

This sequence belongs to the FBPase class 3 family. Requires Mn(2+) as cofactor.

The enzyme catalyses beta-D-fructose 1,6-bisphosphate + H2O = beta-D-fructose 6-phosphate + phosphate. It participates in carbohydrate biosynthesis; gluconeogenesis. This is Fructose-1,6-bisphosphatase class 3 from Clostridium botulinum (strain Okra / Type B1).